We begin with the raw amino-acid sequence, 320 residues long: Putative thiosulfate sulfurtransferase (320 aa).

The first 37 residues, 1–37, serve as a signal peptide directing secretion; the sequence is MSVRSLRWPRQKAFLAVISLVVAVLLAVPGWLTPATA. Rhodanese domains follow at residues 56–166 and 194–315; these read NNKQ…PVTK and LTGK…PVET. The active-site Cysteine persulfide intermediate is the C274.

The protein resides in the periplasm. The enzyme catalyses thiosulfate + hydrogen cyanide = thiocyanate + sulfite + 2 H(+). Its function is as follows. May be a sulfotransferase involved in the transport of sulfate. Displays very low rhodanese activity. The protein is Putative thiosulfate sulfurtransferase (rhdA) of Synechococcus elongatus (strain ATCC 33912 / PCC 7942 / FACHB-805) (Anacystis nidulans R2).